Here is a 500-residue protein sequence, read N- to C-terminus: Nitrate/nitrite transporter NrtP (500 aa).

The next 12 helical transmembrane spans lie at 19 to 39, 52 to 72, 79 to 99, 109 to 129, 147 to 167, 175 to 195, 220 to 240, 247 to 267, 364 to 384, 389 to 409, 425 to 445, and 451 to 471; these read WFAF…ATTI, TLGI…GMLL, ITYS…ALAQ, LLMG…AEWF, FGAF…SFFS, LAIA…YNTV, SFWA…LLAW, IHFL…GLFA, WTMT…HFIN, IPVA…GCGA, IAGN…TIFS, and TLFS…AFFL.

The protein belongs to the major facilitator superfamily. Nitrate/nitrite porter (TC 2.A.1.8) family.

The protein localises to the cell inner membrane. In terms of biological role, transport system for both nitrate and nitrite, with much higher affinity for nitrate than for nitrite. This is Nitrate/nitrite transporter NrtP from Nostoc punctiforme (strain ATCC 29133 / PCC 73102).